Here is a 196-residue protein sequence, read N- to C-terminus: ATP-dependent Clp protease proteolytic subunit (196 aa).

The active-site Nucleophile is the Ser-99. His-124 is a catalytic residue.

Belongs to the peptidase S14 family. Fourteen ClpP subunits assemble into 2 heptameric rings which stack back to back to give a disk-like structure with a central cavity, resembling the structure of eukaryotic proteasomes.

The protein localises to the cytoplasm. It carries out the reaction Hydrolysis of proteins to small peptides in the presence of ATP and magnesium. alpha-casein is the usual test substrate. In the absence of ATP, only oligopeptides shorter than five residues are hydrolyzed (such as succinyl-Leu-Tyr-|-NHMec, and Leu-Tyr-Leu-|-Tyr-Trp, in which cleavage of the -Tyr-|-Leu- and -Tyr-|-Trp bonds also occurs).. In terms of biological role, cleaves peptides in various proteins in a process that requires ATP hydrolysis. Has a chymotrypsin-like activity. Plays a major role in the degradation of misfolded proteins. This is ATP-dependent Clp protease proteolytic subunit from Nitratiruptor sp. (strain SB155-2).